Here is a 397-residue protein sequence, read N- to C-terminus: t-SNARE affecting a late Golgi compartment protein 2 (397 aa).

Residues 1–317 lie on the Cytoplasmic side of the membrane; sequence MFRDRTNLFL…HYQKRTQKCK (317 aa). A coiled-coil region spans residues 74 to 96; sequence DIAQDVDDYLLEVRRLSEQLAKV. A Phosphoserine modification is found at serine 109. The t-SNARE coiled-coil homology domain maps to 244-306; that stretch reads EAYLRERDEE…KSADKELNKA (63 aa). The chain crosses the membrane as a helical; Anchor for type IV membrane protein span at residues 318 to 338; that stretch reads VILLLTLCVIALFFFVMLKPH. Residues 339–397 lie on the Vesicular side of the membrane; sequence GGGSGGRNNGSNKYNNDDNKTVNNSHDDGSNTHINDEESNLPSIVEVTESENDALDDLL. The tract at residues 341–397 is disordered; that stretch reads GSGGRNNGSNKYNNDDNKTVNNSHDDGSNTHINDEESNLPSIVEVTESENDALDDLL. Residues 353–374 are compositionally biased toward basic and acidic residues; it reads NNDDNKTVNNSHDDGSNTHIND. A compositionally biased stretch (acidic residues) spans 386 to 397; the sequence is TESENDALDDLL.

Belongs to the syntaxin family. As to quaternary structure, interacts with VPS45.

It localises to the golgi apparatus. The protein localises to the trans-Golgi network membrane. The protein resides in the endosome membrane. Its function is as follows. t-SNARE that functions in transport from the endosome to the late Golgi and on the endocytic pathway. This is t-SNARE affecting a late Golgi compartment protein 2 (TLG2) from Saccharomyces cerevisiae (strain ATCC 204508 / S288c) (Baker's yeast).